A 104-amino-acid polypeptide reads, in one-letter code: Complex III assembly factor LYRM7 (104 aa).

The stretch at 21 to 48 (VFQNDHRALEAARQRINEEFKKNKRECS) forms a coiled coil.

The protein belongs to the complex I LYR family. As to quaternary structure, interacts with UQCRFS1.

Its subcellular location is the mitochondrion matrix. Its function is as follows. Assembly factor required for Rieske Fe-S protein UQCRFS1 incorporation into the cytochrome b-c1 (CIII) complex. Functions as a chaperone, binding to this subunit within the mitochondrial matrix and stabilizing it prior to its translocation and insertion into the late CIII dimeric intermediate within the mitochondrial inner membrane. The chain is Complex III assembly factor LYRM7 (lyrm7) from Xenopus laevis (African clawed frog).